The chain runs to 150 residues: UPF0756 membrane protein PMI1560 (150 aa).

The next 4 helical transmembrane spans lie at 16–36, 51–71, 82–102, and 123–143; these read GLGI…LLVI, YGMT…IATG, FLNW…WLGA, and VIGV…AGIL.

The protein belongs to the UPF0756 family.

Its subcellular location is the cell membrane. In Proteus mirabilis (strain HI4320), this protein is UPF0756 membrane protein PMI1560.